Here is a 71-residue protein sequence, read N- to C-terminus: Large ribosomal subunit protein uL29 (71 aa).

The segment at 32 to 51 (GVNKSTGGAPSNPGKISETK) is disordered.

It belongs to the universal ribosomal protein uL29 family.

This chain is Large ribosomal subunit protein uL29, found in Methanococcus maripaludis (strain DSM 14266 / JCM 13030 / NBRC 101832 / S2 / LL).